We begin with the raw amino-acid sequence, 1141 residues long: cGMP-inhibited 3',5'-cyclic phosphodiesterase 3A (1141 aa).

Residues 1–42 (MAVPGDAARVRDKPVHSGVSQAPTAGRDCHHRADPASPRDSG) form a disordered region. 6 helical membrane passes run 61–81 (LSSALCAGSLSFLLALLVRLV), 130–150 (LQPSALLFSLLCAFFWMGLYL), 160–180 (AVALLAACCGGEALVQIGLGV), 185–205 (LLSLPAAGVVLSCLAAATWLV), 210–230 (LGVLMIALTSAVRTVSLISLE), and 232–252 (FKVAWRPYLAYLAGVLGILLA). The residue at position 312 (serine 312) is a Phosphoserine. Residues serine 428 and serine 438 each carry the phosphoserine; by PKA and PKC modification. A compositionally biased stretch (low complexity) spans 436 to 448 (RVSSTWTTTTSAT). The disordered stretch occupies residues 436–482 (RVSSTWTTTTSATGLPTLEPAPVRRDRSTSIKLQEAPSSSPDSWNNP). Positions 465 to 482 (SIKLQEAPSSSPDSWNNP) are enriched in polar residues. 3 positions are modified to phosphoserine: serine 492, serine 520, and serine 524. The disordered stretch occupies residues 590 to 640 (RPYSQGNPADEPLERSGVATRTPSRTDDTAQVTSDYETNNNSDSSDIVQNE). Over residues 608–637 (ATRTPSRTDDTAQVTSDYETNNNSDSSDIV) the composition is skewed to polar residues. Positions 669 to 1141 (KPILAPEPLV…EEIPTQKPDQ (473 aa)) are interaction with SLFN12. In terms of domain architecture, PDEase spans 674-1093 (PEPLVMDNLD…KMWKKVIEEE (420 aa)). The active-site Proton donor is histidine 752. An AMP-binding site is contributed by histidine 752. Mn(2+) is bound by residues histidine 756, histidine 836, aspartate 837, and aspartate 950. AMP-binding residues include aspartate 837, aspartate 950, and glutamine 1001. Aspartate 837 contacts Mg(2+). Disordered stretches follow at residues 1023–1062 (PGKWVEDSDESGDTDDPEEEEEEAPAPNEEETCENNESPK) and 1100–1141 (ENQS…KPDQ). A compositionally biased stretch (acidic residues) spans 1029-1056 (DSDESGDTDDPEEEEEEAPAPNEEETCE). A Phosphoserine modification is found at serine 1033. Threonine 1036 bears the Phosphothreonine mark. Residues 1100–1113 (ENQSLDQTPQSHSS) show a composition bias toward polar residues. A Glycyl lysine isopeptide (Lys-Gly) (interchain with G-Cter in SUMO2) cross-link involves residue lysine 1120. Basic and acidic residues predominate over residues 1125–1141 (EKGKPRGEEIPTQKPDQ).

This sequence belongs to the cyclic nucleotide phosphodiesterase family. PDE3 subfamily. In terms of assembly, homodimer. Interacts with SLFN12; direct low affinity interaction which is stimulated by binding of 17beta-estradiol/E2 to PDE3A and that positively regulates the ribonuclease activity of SLFN12. Mn(2+) is required as a cofactor. Mg(2+) serves as cofactor.

The protein localises to the membrane. Its subcellular location is the cytoplasm. It is found in the cytosol. The catalysed reaction is a nucleoside 3',5'-cyclic phosphate + H2O = a nucleoside 5'-phosphate + H(+). The enzyme catalyses 3',5'-cyclic AMP + H2O = AMP + H(+). It catalyses the reaction 3',5'-cyclic GMP + H2O = GMP + H(+). It carries out the reaction 3',5'-cyclic UMP + H2O = UMP + H(+). With respect to regulation, inhibited by cGMP. Inhibited by 17beta-estradiol. Inhibited by milrinone. Cyclic nucleotide phosphodiesterase with specificity for the second messengers cAMP and cGMP, which are key regulators of many important physiological processes. Also has activity toward cUMP. Independently of its catalytic activity it is part of an E2/17beta-estradiol-induced pro-apoptotic signaling pathway. E2 stabilizes the PDE3A/SLFN12 complex in the cytosol, promoting the dephosphorylation of SLFN12 and activating its pro-apoptotic ribosomal RNA/rRNA ribonuclease activity. This apoptotic pathway might be relevant in tissues with high concentration of E2 and be for instance involved in placenta remodeling. In Homo sapiens (Human), this protein is cGMP-inhibited 3',5'-cyclic phosphodiesterase 3A.